The sequence spans 225 residues: C-reactive protein (225 aa).

Residues 1–20 (MEKLLWCFLTLVSFSNMSDQ) form the signal peptide. The Pentraxin (PTX) domain maps to 24–225 (HKKAFVFPKE…EVHVKPQLWP (202 aa)). Cysteine 55 and cysteine 116 are oxidised to a cystine. Ca(2+) contacts are provided by asparagine 80, glutamine 158, aspartate 159, and glutamine 169.

Belongs to the pentraxin family. In terms of assembly, homopentamer. Pentraxin (or pentaxin) have a discoid arrangement of 5 non-covalently bound subunits. Interacts with FCN1; may regulate monocyte activation by FCN1. Ca(2+) serves as cofactor. Found in plasma.

The protein resides in the secreted. Functionally, displays several functions associated with host defense: it promotes agglutination, bacterial capsular swelling, phagocytosis and complement fixation through its calcium-dependent binding to phosphorylcholine. Can interact with DNA and histones and may scavenge nuclear material released from damaged circulating cells. The chain is C-reactive protein (CRP) from Oryctolagus cuniculus (Rabbit).